Here is a 180-residue protein sequence, read N- to C-terminus: Orotate phosphoribosyltransferase (180 aa).

5-phospho-alpha-D-ribose 1-diphosphate is bound by residues Arg95, Lys96, Lys99, and 121 to 129 (EDVTTTGGS). Orotate contacts are provided by Thr125 and Arg153.

It belongs to the purine/pyrimidine phosphoribosyltransferase family. PyrE subfamily. In terms of assembly, homodimer. The cofactor is Mg(2+).

The catalysed reaction is orotidine 5'-phosphate + diphosphate = orotate + 5-phospho-alpha-D-ribose 1-diphosphate. The protein operates within pyrimidine metabolism; UMP biosynthesis via de novo pathway; UMP from orotate: step 1/2. Its function is as follows. Catalyzes the transfer of a ribosyl phosphate group from 5-phosphoribose 1-diphosphate to orotate, leading to the formation of orotidine monophosphate (OMP). The chain is Orotate phosphoribosyltransferase from Methanothermobacter thermautotrophicus (strain ATCC 29096 / DSM 1053 / JCM 10044 / NBRC 100330 / Delta H) (Methanobacterium thermoautotrophicum).